A 747-amino-acid polypeptide reads, in one-letter code: ATPase family gene 2 protein homolog B (747 aa).

The residue at position 1 (methionine 1) is an N-acetylmethionine. Residues 234-241 (GPPGVGKT) and 500-507 (GPPGCAKT) each bind ATP.

The protein belongs to the AAA ATPase family. AFG2 subfamily. Part of the 55LCC heterohexameric ATPase complex composed at least of AIRIM, AFG2A, AFG2B and CINP. Associates with pre-60S ribosomal particles. As to expression, expressed in neurons; also expressed at lower level in astrocytes, oligodendrocytes and microglia.

The protein resides in the cytoplasm. It localises to the cytoskeleton. Its subcellular location is the spindle. The protein localises to the nucleus. It carries out the reaction ATP + H2O = ADP + phosphate + H(+). With respect to regulation, in the context of 55LCC heterohexameric ATPase complex, the ATPase activity is stimulated by DNA binding and inhibited in presence of RNA. In terms of biological role, ATP-dependent chaperone part of the 55LCC heterohexameric ATPase complex which is chromatin-associated and promotes replisome proteostasis to maintain replication fork progression and genome stability. Required for replication fork progression, sister chromatid cohesion, and chromosome stability. The ATPase activity is specifically enhanced by replication fork DNA and is coupled to cysteine protease-dependent cleavage of replisome substrates in response to replication fork damage. Uses ATPase activity to process replisome substrates in S-phase, facilitating their proteolytic turnover from chromatin to ensure DNA replication and mitotic fidelity. Plays an essential role in the cytoplasmic maturation steps of pre-60S ribosomal particles by promoting the release of shuttling protein RSL24D1/RLP24 from the pre-ribosomal particles. This chain is ATPase family gene 2 protein homolog B (Afg2b), found in Rattus norvegicus (Rat).